The following is a 334-amino-acid chain: N-acetyl-gamma-glutamyl-phosphate reductase (334 aa).

Residue Cys-154 is part of the active site.

This sequence belongs to the NAGSA dehydrogenase family. Type 1 subfamily.

The protein resides in the cytoplasm. It carries out the reaction N-acetyl-L-glutamate 5-semialdehyde + phosphate + NADP(+) = N-acetyl-L-glutamyl 5-phosphate + NADPH + H(+). It functions in the pathway amino-acid biosynthesis; L-arginine biosynthesis; N(2)-acetyl-L-ornithine from L-glutamate: step 3/4. Catalyzes the NADPH-dependent reduction of N-acetyl-5-glutamyl phosphate to yield N-acetyl-L-glutamate 5-semialdehyde. This chain is N-acetyl-gamma-glutamyl-phosphate reductase, found in Vibrio vulnificus (strain YJ016).